Consider the following 229-residue polypeptide: Guanylate kinase (229 aa).

An RPE1 insert domain is found at arginine 7–serine 42. The Guanylate kinase-like domain maps to glycine 44 to valine 222. ATP is bound at residue serine 51–serine 58.

It belongs to the guanylate kinase family.

The protein localises to the cytoplasm. The enzyme catalyses GMP + ATP = GDP + ADP. Functionally, essential for recycling GMP and indirectly, cGMP. This chain is Guanylate kinase (gmk), found in Rickettsia conorii (strain ATCC VR-613 / Malish 7).